The primary structure comprises 131 residues: Inner membrane protein YecN (131 aa).

Residues 1–107 (MVSALYAVLS…RWRRSGMSAT (107 aa)) are Cytoplasmic-facing. Residues 108–128 (WCALLLMVLANLWYMPWELVF) traverse the membrane as a helical segment. Over 129-131 (SLR) the chain is Periplasmic.

It localises to the cell inner membrane. The protein is Inner membrane protein YecN (yecN) of Escherichia coli O6:H1 (strain CFT073 / ATCC 700928 / UPEC).